The following is a 94-amino-acid chain: Exodeoxyribonuclease 7 small subunit (94 aa).

The disordered stretch occupies residues 1–21 (MPRAPNDAPSASATPSATPAS).

This sequence belongs to the XseB family. In terms of assembly, heterooligomer composed of large and small subunits.

It is found in the cytoplasm. The enzyme catalyses Exonucleolytic cleavage in either 5'- to 3'- or 3'- to 5'-direction to yield nucleoside 5'-phosphates.. Functionally, bidirectionally degrades single-stranded DNA into large acid-insoluble oligonucleotides, which are then degraded further into small acid-soluble oligonucleotides. The sequence is that of Exodeoxyribonuclease 7 small subunit from Ralstonia pickettii (strain 12J).